Consider the following 699-residue polypeptide: Elongation factor G 1 (699 aa).

In terms of domain architecture, tr-type G spans 8–290 (ERYRNIGICA…AVIEYLPSPI (283 aa)). GTP-binding positions include 17-24 (AHVDAGKT), 88-92 (DTPGH), and 142-145 (NKMD).

It belongs to the TRAFAC class translation factor GTPase superfamily. Classic translation factor GTPase family. EF-G/EF-2 subfamily.

Its subcellular location is the cytoplasm. Its function is as follows. Catalyzes the GTP-dependent ribosomal translocation step during translation elongation. During this step, the ribosome changes from the pre-translocational (PRE) to the post-translocational (POST) state as the newly formed A-site-bound peptidyl-tRNA and P-site-bound deacylated tRNA move to the P and E sites, respectively. Catalyzes the coordinated movement of the two tRNA molecules, the mRNA and conformational changes in the ribosome. The chain is Elongation factor G 1 from Vibrio vulnificus (strain YJ016).